The sequence spans 118 residues: Small nuclear ribonucleoprotein Sm D2 (118 aa).

The interval 1–31 (MSLLNKPKSEMTPEELQKREEEEFNTGPLSV) is disordered. An N-acetylserine modification is found at S2. Residues K6 and K8 each participate in a glycyl lysine isopeptide (Lys-Gly) (interchain with G-Cter in SUMO2) cross-link. Residues 7–21 (PKSEMTPEELQKREE) are compositionally biased toward basic and acidic residues. S9 is subject to Phosphoserine. T12 carries the post-translational modification Phosphothreonine. One can recognise a Sm domain in the interval 29-115 (LSVLTQSVKN…VIVVLRNPLI (87 aa)).

Belongs to the snRNP core protein family. As to quaternary structure, core component of the spliceosomal U1, U2, U4 and U5 small nuclear ribonucleoproteins (snRNPs), the building blocks of the spliceosome. Most spliceosomal snRNPs contain a common set of Sm proteins, SNRPB, SNRPD1, SNRPD2, SNRPD3, SNRPE, SNRPF and SNRPG that assemble in a heptameric protein ring on the Sm site of the small nuclear RNA to form the core snRNP. Component of the U1 snRNP. The U1 snRNP is composed of the U1 snRNA and the 7 core Sm proteins SNRPB, SNRPD1, SNRPD2, SNRPD3, SNRPE, SNRPF and SNRPG, and at least three U1 snRNP-specific proteins SNRNP70/U1-70K, SNRPA/U1-A and SNRPC/U1-C. Component of the U4/U6-U5 tri-snRNP complex composed of the U4, U6 and U5 snRNAs and at least PRPF3, PRPF4, PRPF6, PRPF8, PRPF31, SNRNP200, TXNL4A, SNRNP40, SNRPB, SNRPD1, SNRPD2, SNRPD3, SNRPE, SNRPF, SNRPG, DDX23, CD2BP2, PPIH, SNU13, EFTUD2, SART1 and USP39, plus LSM2, LSM3, LSM4, LSM5, LSM6, LSM7 and LSM8. Component of the minor spliceosome, which splices U12-type introns. Part of the SMN-Sm complex that contains SMN1, GEMIN2/SIP1, DDX20/GEMIN3, GEMIN4, GEMIN5, GEMIN6, GEMIN7, GEMIN8, STRAP/UNRIP and the Sm proteins SNRPB, SNRPD1, SNRPD2, SNRPD3, SNRPE, SNRPF and SNRPG; catalyzes core snRNPs assembly. Forms a 6S pICln-Sm complex composed of CLNS1A/pICln, SNRPD1, SNRPD2, SNRPE, SNRPF and SNRPG; ring-like structure where CLNS1A/pICln mimics additional Sm proteins and which is unable to assemble into the core snRNP. Interacts with SMN1; the interaction is direct. Interacts with GEMIN2; the interaction is direct. Interacts with SNRPD1; the interaction is direct. Interacts with SNRPF; the interaction is direct.

It is found in the cytoplasm. Its subcellular location is the cytosol. It localises to the nucleus. Plays a role in pre-mRNA splicing as a core component of the spliceosomal U1, U2, U4 and U5 small nuclear ribonucleoproteins (snRNPs), the building blocks of the spliceosome. Component of both the pre-catalytic spliceosome B complex and activated spliceosome C complexes. As a component of the minor spliceosome, involved in the splicing of U12-type introns in pre-mRNAs. The protein is Small nuclear ribonucleoprotein Sm D2 (SNRPD2) of Homo sapiens (Human).